A 101-amino-acid chain; its full sequence is Small ribosomal subunit protein uS10 (101 aa).

It belongs to the universal ribosomal protein uS10 family. As to quaternary structure, part of the 30S ribosomal subunit.

Its function is as follows. Involved in the binding of tRNA to the ribosomes. The protein is Small ribosomal subunit protein uS10 of Corynebacterium jeikeium (strain K411).